Reading from the N-terminus, the 622-residue chain is Pyranose 2-oxidase (622 aa).

A signal peptide spans 1–28; the sequence is MSTSSSDPFYNFAKTSFKSAAAQKASAT. The propeptide occupies 29–38; it reads SLPPLPGPDQ. Position 167 is a tele-8alpha-FAD histidine (histidine 167). Glutamine 448 and histidine 450 together coordinate substrate. Residue histidine 548 is the Proton acceptor of the active site. The active site involves asparagine 593.

This sequence belongs to the GMC oxidoreductase family. As to quaternary structure, homotetramer. It depends on FAD as a cofactor.

It is found in the periplasm. It carries out the reaction D-glucose + O2 = 2-dehydro-D-glucose + H2O2. Functionally, catalyzes the oxidation of various aldopyranoses and disaccharides on carbon-2 to the corresponding 2-keto sugars concomitant with the reduction of O(2) to H(2)O(2). Plays an important role in lignin degradation of wood rot fungi by supplying the essential cosubstrate H(2)O(2) for the ligninolytic peroxidases, lignin peroxidase and manganese-dependent peroxidase. This chain is Pyranose 2-oxidase (p2ox), found in Trametes pubescens (White-rot fungus).